The following is a 171-amino-acid chain: Replication restart protein PriC (171 aa).

This sequence belongs to the PriC family. As to quaternary structure, monomer. Component of the replication restart primosome, which is composed of PriA, PriB, PriC, DnaBe and DnaT; DnaG primase associates transiently with this complex. Interacts with the C-terminus of SSB. SSB interaction is required to load the main replicative helicase onto substrate replication forks. Interacts with helicase DnaB alone and in the DnaB-DnaC complex, probably 1:1 binding with DnaB.

Functionally, involved in the restart of stalled replication forks, which reloads the DnaB replicative helicase on sites other than the origin of replication. In vitro can load (E.coli) DnaB replicative helicase from a DnaB-DnaC complex on a single-stranded DNA (ssDNA)-binding protein (SSB)-coated stalled replication fork with no leading- or lagging-strand in the absence of other primosome proteins (PriA, PriB or DnaT). Binds SSB (tested with E.coli protein) and ssDNA. Complements priC in an E.coli priB-priC double deletion. The polypeptide is Replication restart protein PriC (Cronobacter sakazakii (strain ATCC BAA-894) (Enterobacter sakazakii)).